The primary structure comprises 704 residues: Ion-translocating oxidoreductase complex subunit C (704 aa).

4Fe-4S ferredoxin-type domains lie at 368–397 (MGAPQEEKSCIRCSACADACPADLLPQQLY) and 407–436 (KATAHHIADCIECGACAWVCPSNIPLVQYF). Positions 377, 380, 383, 387, 416, 419, 422, and 426 each coordinate [4Fe-4S] cluster. The disordered stretch occupies residues 536–684 (RAKQAAHPMA…PADPRKAAVA (149 aa)). Positions 556–565 (KAAVEAAIAR) are enriched in low complexity.

Belongs to the 4Fe4S bacterial-type ferredoxin family. RnfC subfamily. The complex is composed of six subunits: RsxA, RsxB, RsxC, RsxD, RsxE and RsxG. It depends on [4Fe-4S] cluster as a cofactor.

The protein localises to the cell inner membrane. Functionally, part of a membrane-bound complex that couples electron transfer with translocation of ions across the membrane. Required to maintain the reduced state of SoxR. In Salmonella choleraesuis (strain SC-B67), this protein is Ion-translocating oxidoreductase complex subunit C.